The sequence spans 449 residues: Chromosomal replication initiator protein DnaA (449 aa).

A domain I, interacts with DnaA modulators region spans residues 1-69 (MEKVWLEAQS…VEAISSLTSV (69 aa)). Residues 69 to 112 (VKYQIEFKITEKIPLESKPVDNFTPVIKDNEPSKETNKNIDITA) are domain II. A domain III, AAA+ region region spans residues 113 to 329 (NLNPKYTFDS…GMLIRLGAYA (217 aa)). ATP is bound by residues Gly157, Gly159, Lys160, and Thr161. Residues 330–449 (SLTGSEITLN…VENLKKELIT (120 aa)) form a domain IV, binds dsDNA region.

The protein belongs to the DnaA family. As to quaternary structure, oligomerizes as a right-handed, spiral filament on DNA at oriC.

It localises to the cytoplasm. In terms of biological role, plays an essential role in the initiation and regulation of chromosomal replication. ATP-DnaA binds to the origin of replication (oriC) to initiate formation of the DNA replication initiation complex once per cell cycle. Binds the DnaA box (a 9 base pair repeat at the origin) and separates the double-stranded (ds)DNA. Forms a right-handed helical filament on oriC DNA; dsDNA binds to the exterior of the filament while single-stranded (ss)DNA is stabiized in the filament's interior. The ATP-DnaA-oriC complex binds and stabilizes one strand of the AT-rich DNA unwinding element (DUE), permitting loading of DNA polymerase. After initiation quickly degrades to an ADP-DnaA complex that is not apt for DNA replication. Binds acidic phospholipids. This is Chromosomal replication initiator protein DnaA from Geotalea uraniireducens (strain Rf4) (Geobacter uraniireducens).